Here is a 230-residue protein sequence, read N- to C-terminus: Ureidoacrylate amidohydrolase RutB (230 aa).

Aspartate 24 (proton acceptor) is an active-site residue. Lysine 133 is an active-site residue. Cysteine 166 serves as the catalytic Nucleophile.

Belongs to the isochorismatase family. RutB subfamily.

The enzyme catalyses (Z)-3-ureidoacrylate + H2O + H(+) = (Z)-3-aminoacrylate + NH4(+) + CO2. It catalyses the reaction (Z)-3-ureidoacrylate + H2O = (Z)-3-aminoacrylate + carbamate + H(+). It carries out the reaction (Z)-2-methylureidoacrylate + H2O + H(+) = (Z)-2-methylaminoacrylate + NH4(+) + CO2. In terms of biological role, hydrolyzes ureidoacrylate to form aminoacrylate and carbamate. The carbamate hydrolyzes spontaneously, thereby releasing one of the nitrogen atoms of the pyrimidine ring as ammonia and one of its carbon atoms as CO2. This is Ureidoacrylate amidohydrolase RutB from Escherichia coli (strain K12 / MC4100 / BW2952).